The chain runs to 661 residues: uncharacterized protein (661 aa).

A disordered region spans residues leucine 25–asparagine 52. Positions threonine 42–asparagine 52 are enriched in polar residues. The SANT domain maps to serine 246–aspartate 297. 4 disordered regions span residues threonine 306–glycine 329, tyrosine 478–glutamate 499, proline 548–leucine 570, and arginine 604–glutamine 633. Residues threonine 308–lysine 328 show a composition bias toward basic residues. Over residues tyrosine 478–serine 487 the composition is skewed to basic and acidic residues. A compositionally biased stretch (basic and acidic residues) spans arginine 604–threonine 617.

Its subcellular location is the nucleus. This is an uncharacterized protein from Schizosaccharomyces pombe (strain 972 / ATCC 24843) (Fission yeast).